A 348-amino-acid chain; its full sequence is Phosphoribosylformylglycinamidine cyclo-ligase (348 aa).

This sequence belongs to the AIR synthase family.

The protein localises to the cytoplasm. The enzyme catalyses 2-formamido-N(1)-(5-O-phospho-beta-D-ribosyl)acetamidine + ATP = 5-amino-1-(5-phospho-beta-D-ribosyl)imidazole + ADP + phosphate + H(+). The protein operates within purine metabolism; IMP biosynthesis via de novo pathway; 5-amino-1-(5-phospho-D-ribosyl)imidazole from N(2)-formyl-N(1)-(5-phospho-D-ribosyl)glycinamide: step 2/2. The protein is Phosphoribosylformylglycinamidine cyclo-ligase of Cereibacter sphaeroides (strain ATCC 17029 / ATH 2.4.9) (Rhodobacter sphaeroides).